The primary structure comprises 415 residues: Protein CDC73 homolog (415 aa).

Belongs to the CDC73 family. As to quaternary structure, component of the nuclear PAF1 complex (PAF1C), which consists of VIP2/ELF7/PAF1, VIP3/SKI8/WDR61, VIP4/LEO1, VIP5/RTF1, VIP6/ELF8/CTR9 and CDC73. Expressed in root tips, shoot apex, young leaves and flowers, especially in stamen filaments and carpels.

The protein resides in the nucleus. Functionally, component of the PAF1 complex (PAF1C) which is involved in histone modifications such as methylation on histone H3 'Lys-4' (H3K4me3). Involved in regulation of flowering time. Required for the expression of the flowering repressors FLC and MADS-box genes of the MAF family. Required for histone H3 trimethylation on 'Lys-4' (H3K4me3) at the FLC locus. Prevents trimethylation on 'Lys-27' (H3K27me3) at the same locus. This is Protein CDC73 homolog from Arabidopsis thaliana (Mouse-ear cress).